The sequence spans 571 residues: MTLSPEDLKTIEKYAYQNAVKYGKAPQPKAVMGKVMGECPQLRSDPNAVSEALKVIIPEIAKGNPETWETKLSEIAPELIEALSVKKEPDKGLKPLEGAENGKVVMRFAPNPNGPATLGSARGMVVNSEYVKMYGGKFVLRFDDTDPDIKRPLLQAYDWYLDDFKWLGVVPDQVVYASDHFPMYYDYARKLIEMGKAYVCFCKGGDFKRFKDAKQSCPHRDTSPEENLMHWEKMLAGEYEDQQAVLRIKTDIKHKDPALRDWGAFRIRKMSHPRPEIGNKYVVWPLLDFAGAIEDHELGMTHIIRGKDLIDSEKRQGYIYKYFGWKYPRTTNWGRVKIHEFGKFSTSTLRKAIEAGEYSGWDDPRLPTIRAIRRRGIQAEALKKFMIEMGVGMTDVSISMESLYAENRKIVDPIANRYFFVWNPVELEITDAEPTVAKLPLHPTDHKRGFREIAVGNKVLVCTEDVEKLEVGSIIRLKDFCNIEITSLSPLQAKLSDVSLEALKKAKAKIIHWAPLDGINVKVRGPEGDLNGIGEQGIAAELDKIVQFERFGFCRIDAVSEDEIVAYFAHK.

The 'HIGH' region motif lies at 110–120 (PNPNGPATLGS).

The protein belongs to the class-I aminoacyl-tRNA synthetase family. Glutamate--tRNA ligase type 2 subfamily.

The protein resides in the cytoplasm. The enzyme catalyses tRNA(Glu) + L-glutamate + ATP = L-glutamyl-tRNA(Glu) + AMP + diphosphate. Its function is as follows. Catalyzes the attachment of glutamate to tRNA(Glu) in a two-step reaction: glutamate is first activated by ATP to form Glu-AMP and then transferred to the acceptor end of tRNA(Glu). The sequence is that of Glutamate--tRNA ligase from Methanosarcina barkeri (strain Fusaro / DSM 804).